A 270-amino-acid chain; its full sequence is Putative methylsterol monooxygenase DDB_G0269788 (270 aa).

3 helical membrane-spanning segments follow: residues 31 to 51 (FIAH…CDFM), 82 to 102 (IFVQ…IGLS), and 110 to 130 (IPYL…YFYW). One can recognise a Fatty acid hydroxylase domain in the interval 118-249 (ACCFLIEDFY…FTYLDKIFGT (132 aa)). The Histidine box-1 signature appears at 132-136 (HRALH). The Histidine box-2 signature appears at 145–149 (HKVHH). A Histidine box-3 motif is present at residues 224-230 (FHDFHHE).

This sequence belongs to the sterol desaturase family. It depends on Fe cation as a cofactor.

It is found in the endoplasmic reticulum membrane. It catalyses the reaction 4,4-dimethyl-5alpha-cholest-7-en-3beta-ol + 6 Fe(II)-[cytochrome b5] + 3 O2 + 5 H(+) = 4alpha-carboxy-4beta-methyl-5alpha-cholest-7-ene-3beta-ol + 6 Fe(III)-[cytochrome b5] + 4 H2O. It functions in the pathway steroid biosynthesis; zymosterol biosynthesis; zymosterol from lanosterol: step 3/6. The polypeptide is Putative methylsterol monooxygenase DDB_G0269788 (Dictyostelium discoideum (Social amoeba)).